The chain runs to 87 residues: Small ribosomal subunit protein bS20 (87 aa).

Positions 1-25 are disordered; it reads MANTAQARKRARQSVQRNKHNSSLR. A compositionally biased stretch (basic residues) spans 7–22; it reads ARKRARQSVQRNKHNS.

This sequence belongs to the bacterial ribosomal protein bS20 family.

Its function is as follows. Binds directly to 16S ribosomal RNA. The chain is Small ribosomal subunit protein bS20 from Bordetella bronchiseptica (strain ATCC BAA-588 / NCTC 13252 / RB50) (Alcaligenes bronchisepticus).